Here is a 611-residue protein sequence, read N- to C-terminus: Serine/arginine repetitive matrix protein 4 (611 aa).

2 disordered regions span residues 38-248 (ARKP…PLQM) and 263-611 (SAAD…STRR). 2 stretches are compositionally biased toward basic residues: residues 107–123 (RGKKKKKKSTRKKRRRS) and 131–189 (VKKK…HRCP). Positions 190–202 (SRSQSSESRPSSC) are enriched in low complexity. Residues 203-216 (ESRHRGRSPEEGQK) show a composition bias toward basic and acidic residues. A compositionally biased stretch (basic residues) spans 217 to 226 (SRRRHSRRCS). Over residues 270-290 (KTASPLTTSRGRSQEYDSGND) the composition is skewed to polar residues. A compositionally biased stretch (low complexity) spans 291–301 (TSSPPSTQTSS). Polar residues predominate over residues 322 to 341 (LNSGNTSDSGNSFTTSSPQN). Low complexity-rich tracts occupy residues 390–422 (SRSSSYASTRSSSHSSRSPNPRASPRYTQSRST) and 430–461 (SRSPSYSSKSGKRSPPSRSSRSRRSPSYSRYS). Over residues 462–482 (PSRERDPKYSEKDSQQRERER) the composition is skewed to basic and acidic residues. Over residues 483 to 498 (ARRRRRSYSPMRKRRR) the composition is skewed to basic residues. A compositionally biased stretch (basic and acidic residues) spans 499–508 (DSPSHLEARR). The segment covering 522–549 (PSPSSSGSLSSTSSWYSSSSSRSASRSY) has biased composition (low complexity). The segment covering 550–564 (SRSRSRSRSRRRSRT) has biased composition (basic residues). A compositionally biased stretch (low complexity) spans 565-580 (RTSSSSSSRSPSPGSR). Over residues 581–595 (SRSRSRSRSRSRSRS) the composition is skewed to basic residues. A compositionally biased stretch (low complexity) spans 596–611 (QSRSYSSADSYSSTRR).

It belongs to the nSR100 family. Post-translationally, phosphorylated. Specifically expressed in neuronal cells (at protein level). Expressed in the cerebellum.

Its subcellular location is the nucleus. In terms of biological role, splicing factor specifically required for neural cell differentiation. Acts in conjunction with nPTB/PTBP2 by binding directly to its regulated target transcripts and promotes neural-specific exon inclusion in many genes that function in neural cell differentiation. Required to promote the inclusion of neural-specific exon 10 in nPTB/PTBP2, leading to increased expression of neural-specific nPTB/PTBP2. Also promotes the inclusion of exon 16 in DAAM1 in neuron extracts. Promotes alternative splicing of REST transcripts to produce REST isoform 3 (REST4) with greatly reduced repressive activity, thereby activating expression of REST targets in neural cells. Plays an important role during embryonic development as well as in the proper functioning of the adult nervous system. Regulates alternative splicing events in genes with important neuronal functions. The protein is Serine/arginine repetitive matrix protein 4 (SRRM4) of Homo sapiens (Human).